Consider the following 170-residue polypeptide: Gas vesicle protein A2 (170 aa).

The interval 86 to 170 (SPMAKTVGRA…PRRRTEEEDR (85 aa)) is disordered. 2 stretches are compositionally biased toward basic and acidic residues: residues 104–119 (LTDKVRDVLTPEHEHE) and 127–137 (DRPRAGAERGR). The span at 138–148 (STQRPRSRPAA) shows a compositional bias: basic residues. The span at 149–170 (RPRDEDDRPRSRPRRRTEEEDR) shows a compositional bias: basic and acidic residues.

This sequence belongs to the gas vesicle GvpA family. The gas vesicle shell is 2 nm thick and consists of a single layer of this protein. It forms helical ribs nearly perpendicular to the long axis of the vesicle.

It is found in the gas vesicle shell. Gas vesicles are hollow, gas filled proteinaceous nanostructures found in some microorganisms. During planktonic growth they allow positioning of the organism at a favorable depth for light or nutrient acquisition. GvpA forms the protein shell. It is not clear what function GVs perform in soil bacteria. This is Gas vesicle protein A2 from Streptomyces coelicolor (strain ATCC BAA-471 / A3(2) / M145).